The primary structure comprises 451 residues: Metalloprotease MJ0996 (451 aa).

It belongs to the peptidase U62 family.

Probable metalloprotease. In Methanocaldococcus jannaschii (strain ATCC 43067 / DSM 2661 / JAL-1 / JCM 10045 / NBRC 100440) (Methanococcus jannaschii), this protein is Metalloprotease MJ0996.